A 725-amino-acid polypeptide reads, in one-letter code: Catalase-peroxidase (725 aa).

Positions 90 to 213 (WHSAGTYRTG…LAAVQMGLIY (124 aa)) form a cross-link, tryptophyl-tyrosyl-methioninium (Trp-Tyr) (with M-239). The Proton acceptor role is filled by histidine 91. The tryptophyl-tyrosyl-methioninium (Tyr-Met) (with W-90) cross-link spans 213–239 (YVNPEGPNGNPDPVAAAKDIRETFARM). Residue histidine 254 coordinates heme b.

This sequence belongs to the peroxidase family. Peroxidase/catalase subfamily. Homodimer or homotetramer. The cofactor is heme b. Post-translationally, formation of the three residue Trp-Tyr-Met cross-link is important for the catalase, but not the peroxidase activity of the enzyme.

The catalysed reaction is H2O2 + AH2 = A + 2 H2O. The enzyme catalyses 2 H2O2 = O2 + 2 H2O. Functionally, bifunctional enzyme with both catalase and broad-spectrum peroxidase activity. This is Catalase-peroxidase from Hahella chejuensis (strain KCTC 2396).